Consider the following 259-residue polypeptide: tRNA (guanine-N(7)-)-methyltransferase (259 aa).

S-adenosyl-L-methionine contacts are provided by residues Gly80, 103–104 (EL), 136–137 (NS), and Leu156. Residue Asp159 is part of the active site. 234–236 (TEE) lines the S-adenosyl-L-methionine pocket.

Belongs to the class I-like SAM-binding methyltransferase superfamily. TrmB family.

It localises to the nucleus. It catalyses the reaction guanosine(46) in tRNA + S-adenosyl-L-methionine = N(7)-methylguanosine(46) in tRNA + S-adenosyl-L-homocysteine. It functions in the pathway tRNA modification; N(7)-methylguanine-tRNA biosynthesis. Its function is as follows. Catalyzes the formation of N(7)-methylguanine at position 46 (m7G46) in tRNA. This is tRNA (guanine-N(7)-)-methyltransferase from Oryza sativa subsp. indica (Rice).